We begin with the raw amino-acid sequence, 393 residues long: NAD(P)H-quinone oxidoreductase subunit H, chloroplastic (393 aa).

It belongs to the complex I 49 kDa subunit family. As to quaternary structure, NDH is composed of at least 16 different subunits, 5 of which are encoded in the nucleus.

The protein resides in the plastid. Its subcellular location is the chloroplast thylakoid membrane. The enzyme catalyses a plastoquinone + NADH + (n+1) H(+)(in) = a plastoquinol + NAD(+) + n H(+)(out). It catalyses the reaction a plastoquinone + NADPH + (n+1) H(+)(in) = a plastoquinol + NADP(+) + n H(+)(out). NDH shuttles electrons from NAD(P)H:plastoquinone, via FMN and iron-sulfur (Fe-S) centers, to quinones in the photosynthetic chain and possibly in a chloroplast respiratory chain. The immediate electron acceptor for the enzyme in this species is believed to be plastoquinone. Couples the redox reaction to proton translocation, and thus conserves the redox energy in a proton gradient. The protein is NAD(P)H-quinone oxidoreductase subunit H, chloroplastic of Phaseolus vulgaris (Kidney bean).